Reading from the N-terminus, the 133-residue chain is Cytidine deaminase (133 aa).

Residues 4–126 form the CMP/dCMP-type deaminase domain; the sequence is VDWNMLRGNA…DLLPDAFGLD (123 aa). Substrate is bound at residue 45-47; it reads NVE. C56 provides a ligand contact to Zn(2+). Residue E58 is the Proton donor of the active site. Residues C89 and C92 each coordinate Zn(2+).

The protein belongs to the cytidine and deoxycytidylate deaminase family. Homotetramer. It depends on Zn(2+) as a cofactor.

It carries out the reaction cytidine + H2O + H(+) = uridine + NH4(+). The catalysed reaction is 2'-deoxycytidine + H2O + H(+) = 2'-deoxyuridine + NH4(+). Recycles cytidine and 2-deoxycytidine for uridine and 2-deoxyuridine synthesis, respectively. Catalyzes the hydrolytic deamination of cytidine and 2-deoxycytidine to form, respectively, uridine and 2-deoxyuridine. This chain is Cytidine deaminase (cdd), found in Mycobacterium tuberculosis (strain CDC 1551 / Oshkosh).